Reading from the N-terminus, the 200-residue chain is Phospholipase A2 inhibitor NAI (200 aa).

The first 19 residues, 1–19, serve as a signal peptide directing secretion; the sequence is MKSLLFCCLFGTFLATGMC. 8 cysteine pairs are disulfide-bonded: Cys22/Cys46, Cys25/Cys32, Cys39/Cys67, Cys73/Cys94, Cys95/Cys100, Cys120/Cys145, Cys138/Cys165, and Cys171/Cys191.

It belongs to the CNF-like-inhibitor family. In terms of assembly, heterotrimer of 2 subunits A and 1 subunit B; non-covalently linked. In terms of tissue distribution, expressed by the liver.

The protein localises to the secreted. In terms of biological role, inhibits the enzymatic activity of all phospholipase A2 tested, binding with micromole to nanomole affinity. The protein is Phospholipase A2 inhibitor NAI of Notechis ater (Black tiger snake).